The chain runs to 396 residues: Elongation factor Tu 1 (396 aa).

One can recognise a tr-type G domain in the interval 10 to 206 (KPHVNVGTIG…ALDSYIPLPE (197 aa)). A G1 region spans residues 19 to 26 (GHVDHGKT). GTP is bound at residue 19–26 (GHVDHGKT). Threonine 26 serves as a coordination point for Mg(2+). A G2 region spans residues 60–64 (GITIN). Residues 81–84 (DCPG) are G3. Residues 81–85 (DCPGH) and 136–139 (NKCD) each bind GTP. The G4 stretch occupies residues 136–139 (NKCD). Residues 174–176 (SAK) are G5.

Belongs to the TRAFAC class translation factor GTPase superfamily. Classic translation factor GTPase family. EF-Tu/EF-1A subfamily. Monomer.

The protein resides in the cytoplasm. The catalysed reaction is GTP + H2O = GDP + phosphate + H(+). Its function is as follows. GTP hydrolase that promotes the GTP-dependent binding of aminoacyl-tRNA to the A-site of ribosomes during protein biosynthesis. This chain is Elongation factor Tu 1, found in Albidiferax ferrireducens (strain ATCC BAA-621 / DSM 15236 / T118) (Rhodoferax ferrireducens).